Reading from the N-terminus, the 190-residue chain is Signal peptidase I W (190 aa).

The helical transmembrane segment at 4–24 threads the bilayer; the sequence is ISNILYVIIFTLIIVLTLVVI. Serine 45 is a catalytic residue. Residues 143–163 traverse the membrane as a helical segment; the sequence is PIGTAVLLIVPGVMLLVYAFV.

Belongs to the peptidase S26B family.

It localises to the cell membrane. It carries out the reaction Cleavage of hydrophobic, N-terminal signal or leader sequences from secreted and periplasmic proteins.. Required for the cleavage of the signal sequence of TasA and TapA, which are involved in biofilm formation. This is Signal peptidase I W from Bacillus subtilis (strain 168).